The primary structure comprises 318 residues: Glycine--tRNA ligase alpha subunit (318 aa).

It belongs to the class-II aminoacyl-tRNA synthetase family. In terms of assembly, tetramer of two alpha and two beta subunits.

Its subcellular location is the cytoplasm. The enzyme catalyses tRNA(Gly) + glycine + ATP = glycyl-tRNA(Gly) + AMP + diphosphate. The polypeptide is Glycine--tRNA ligase alpha subunit (Chelativorans sp. (strain BNC1)).